The following is a 175-amino-acid chain: uncharacterized protein (175 aa).

The Macro domain occupies 1-173 (MYKNIIKLIS…VYKEKYKKLL (173 aa)).

The protein belongs to the MacroD-type family.

This is an uncharacterized protein from Fusobacterium nucleatum subsp. nucleatum (strain ATCC 25586 / DSM 15643 / BCRC 10681 / CIP 101130 / JCM 8532 / KCTC 2640 / LMG 13131 / VPI 4355).